We begin with the raw amino-acid sequence, 173 residues long: Photosystem I assembly protein Ycf3 (173 aa).

3 TPR repeats span residues A35–T68, G72–L105, and G120–N153.

This sequence belongs to the Ycf3 family.

It is found in the cellular thylakoid membrane. In terms of biological role, essential for the assembly of the photosystem I (PSI) complex. May act as a chaperone-like factor to guide the assembly of the PSI subunits. In Nostoc sp. (strain PCC 7120 / SAG 25.82 / UTEX 2576), this protein is Photosystem I assembly protein Ycf3.